Reading from the N-terminus, the 247-residue chain is 5-hydroxytryptamine receptor 2A (247 aa).

Residue K1 is a topological domain, extracellular. Residues 2 to 26 (LCAIWIYLDVLFSTASIMHLCAISL) traverse the membrane as a helical segment. A disulfide bond links C3 and C82. Serotonin is bound at residue D10. The DRY motif; important for ligand-induced conformation changes signature appears at 27-29 (DRY). The Cytoplasmic segment spans residues 27–46 (DRYVAIQNPIHHSRFNSRTK). A helical transmembrane segment spans residues 47–70 (AFLKIIAVWTISVGISMPVPVFGL). The Extracellular segment spans residues 71–87 (QDDSKVFKEGSCLLADD). Residues 88 to 113 (NFVLIGSFVAFFIPLTIMVITYFLTI) traverse the membrane as a helical segment. Residues 114 to 177 (KSLQKEATLC…QSISNEQKAC (64 aa)) are Cytoplasmic-facing. S135 is subject to Phosphoserine. Residues 178 to 203 (KVLGIVFFLFVVMWCPFFVTNIMAVI) traverse the membrane as a helical segment. Residue N198 participates in serotonin binding. C204 and C208 are joined by a disulfide. Over 204-211 (CKESCNED) the chain is Extracellular. A helical transmembrane segment spans residues 212–237 (VIGALLNVFVWIGYLSSAVNPLVYTL). The NPxxY motif; important for ligand-induced conformation changes and signaling motif lies at 231-235 (NPLVY). The Cytoplasmic segment spans residues 238–247 (FNKTYRSAFA).

It belongs to the G-protein coupled receptor 1 family. In terms of assembly, interacts (via C-terminus) with MPDZ and PATJ. May interact (via C-terminus) with MPP3, PRDX6, DLG4, DLG1, CASK, APBA1 and MAGI2. Interacts with GRM2 and DRD2; this may affect signaling. As to expression, detected in adult intestine, especially in mucosal epithelium, longitudinal and circular layers of muscularis externa and myenteric plexuses. Highly expressed in Paneth cells, and detected at lower levels in enterocytes (at protein level).

It is found in the cell membrane. The protein localises to the cell projection. Its subcellular location is the dendrite. The protein resides in the axon. It localises to the cytoplasmic vesicle. It is found in the membrane. The protein localises to the caveola. Its subcellular location is the presynapse. G-protein coupled receptor activity is regulated by lipids: oleamide increases HTR2A-mediated activity. In terms of biological role, G-protein coupled receptor for 5-hydroxytryptamine (serotonin). Also functions as a receptor for various drugs and psychoactive substances, including mescaline, psilocybin, 1-(2,5-dimethoxy-4-iodophenyl)-2-aminopropane (DOI) and lysergic acid diethylamide (LSD). Ligand binding causes a conformation change that triggers signaling via guanine nucleotide-binding proteins (G proteins) and modulates the activity of downstream effectors. HTR2A is coupled to G(q)/G(11) G alpha proteins and activates phospholipase C-beta, releasing diacylglycerol (DAG) and inositol 1,4,5-trisphosphate (IP3) second messengers that modulate the activity of phosphatidylinositol 3-kinase and promote the release of Ca(2+) ions from intracellular stores, respectively. Beta-arrestin family members inhibit signaling via G proteins and mediate activation of alternative signaling pathways. Affects neural activity, perception, cognition and mood. Plays a role in the regulation of behavior, including responses to anxiogenic situations and psychoactive substances. Plays a role in intestinal smooth muscle contraction, and may play a role in arterial vasoconstriction. The protein is 5-hydroxytryptamine receptor 2A (HTR2A) of Cavia porcellus (Guinea pig).